A 543-amino-acid chain; its full sequence is Chaperonin GroEL (543 aa).

Residues 29–32 (TLGP), 86–90 (DGTTT), Gly-413, 476–478 (NAA), and Asp-492 each bind ATP.

The protein belongs to the chaperonin (HSP60) family. Forms a cylinder of 14 subunits composed of two heptameric rings stacked back-to-back. Interacts with the co-chaperonin GroES.

It is found in the cytoplasm. The catalysed reaction is ATP + H2O + a folded polypeptide = ADP + phosphate + an unfolded polypeptide.. Together with its co-chaperonin GroES, plays an essential role in assisting protein folding. The GroEL-GroES system forms a nano-cage that allows encapsulation of the non-native substrate proteins and provides a physical environment optimized to promote and accelerate protein folding. This is Chaperonin GroEL from Streptococcus pyogenes serotype M18 (strain MGAS8232).